An 879-amino-acid polypeptide reads, in one-letter code: Protein translocase subunit SecA (879 aa).

ATP contacts are provided by residues Gln-87, 105 to 109 (GEGKT), and Asp-509. A disordered region spans residues 834–879 (IAEDSEKLKPITGTKKPKRNDPCPCGSGKKYKNCCGQSGPKKGLLA). Residues Cys-856, Cys-858, Cys-867, and Cys-868 each coordinate Zn(2+).

It belongs to the SecA family. As to quaternary structure, monomer and homodimer. Part of the essential Sec protein translocation apparatus which comprises SecA, SecYEG and auxiliary proteins SecDF-YajC and YidC. Requires Zn(2+) as cofactor.

The protein resides in the cell inner membrane. It localises to the cytoplasm. The enzyme catalyses ATP + H2O + cellular proteinSide 1 = ADP + phosphate + cellular proteinSide 2.. Part of the Sec protein translocase complex. Interacts with the SecYEG preprotein conducting channel. Has a central role in coupling the hydrolysis of ATP to the transfer of proteins into and across the cell membrane, serving as an ATP-driven molecular motor driving the stepwise translocation of polypeptide chains across the membrane. The sequence is that of Protein translocase subunit SecA from Sulfurovum sp. (strain NBC37-1).